Reading from the N-terminus, the 375-residue chain is uncharacterized protein (375 aa).

Topologically, residues 1-2 (MR) are cytoplasmic. Residues 3–23 (WYSYVIPAVILSIIAISGVWW) form a helical; Signal-anchor for type II membrane protein membrane-spanning segment. Topologically, residues 24 to 375 (NATLGTRLDQ…YIEQRLFPQP (352 aa)) are lumenal.

This sequence belongs to the glycosyltransferase 34 family.

The protein resides in the endoplasmic reticulum membrane. It is found in the golgi apparatus membrane. This is an uncharacterized protein from Schizosaccharomyces pombe (strain 972 / ATCC 24843) (Fission yeast).